The sequence spans 591 residues: Transcription factor COE1-A (591 aa).

The interaction with DNA stretch occupies residues 63–66 (RKSN). A C5-type zinc finger spans residues 151 to 170 (CRVLLTHEIMCSRCCDKKSC). Interaction with DNA stretches follow at residues 197–204 (NCLKNAGN) and 236–239 (NNSK). The IPT/TIG domain occupies 262-344 (PCIKAISPSE…CKGTPGRFIY (83 aa)). Positions 454-466 (ANQGFSRNTSSVS) are enriched in polar residues. Residues 454 to 484 (ANQGFSRNTSSVSPHGYVPSTTPQQSSYSTV) are disordered. A compositionally biased stretch (low complexity) spans 471–484 (VPSTTPQQSSYSTV).

This sequence belongs to the COE family. As to quaternary structure, forms either a homodimer or a heterodimer with a related family member. In terms of tissue distribution, detected in B cells.

It localises to the nucleus. In terms of biological role, transcriptional activator. The polypeptide is Transcription factor COE1-A (Danio rerio (Zebrafish)).